The primary structure comprises 423 residues: Putative competence-damage inducible protein (423 aa).

This sequence belongs to the CinA family.

The polypeptide is Putative competence-damage inducible protein (Streptococcus pyogenes serotype M4 (strain MGAS10750)).